Reading from the N-terminus, the 69-residue chain is DNA gyrase inhibitor YacG (69 aa).

The Zn(2+) site is built by C13, C16, C32, and C36.

This sequence belongs to the DNA gyrase inhibitor YacG family. Interacts with GyrB. Requires Zn(2+) as cofactor.

Inhibits all the catalytic activities of DNA gyrase by preventing its interaction with DNA. Acts by binding directly to the C-terminal domain of GyrB, which probably disrupts DNA binding by the gyrase. In Neisseria meningitidis serogroup B (strain ATCC BAA-335 / MC58), this protein is DNA gyrase inhibitor YacG.